The sequence spans 210 residues: ATP-dependent dethiobiotin synthetase BioD (210 aa).

12 to 17 (NVGKTH) contacts ATP. Threonine 16 serves as a coordination point for Mg(2+). Lysine 37 is an active-site residue. Threonine 41 contributes to the substrate binding site. Glutamate 114 lines the Mg(2+) pocket. 114 to 117 (EGAG) contacts ATP.

Belongs to the dethiobiotin synthetase family. Homodimer. Requires Mg(2+) as cofactor.

Its subcellular location is the cytoplasm. The enzyme catalyses (7R,8S)-7,8-diammoniononanoate + CO2 + ATP = (4R,5S)-dethiobiotin + ADP + phosphate + 3 H(+). Its pathway is cofactor biosynthesis; biotin biosynthesis; biotin from 7,8-diaminononanoate: step 1/2. Functionally, catalyzes a mechanistically unusual reaction, the ATP-dependent insertion of CO2 between the N7 and N8 nitrogen atoms of 7,8-diaminopelargonic acid (DAPA, also called 7,8-diammoniononanoate) to form a ureido ring. This chain is ATP-dependent dethiobiotin synthetase BioD, found in Sulfurovum sp. (strain NBC37-1).